A 163-amino-acid polypeptide reads, in one-letter code: Steroid receptor-associated and regulated protein (163 aa).

Positions 1–16 (MAFSKDPRRTSLRDSS) are enriched in basic and acidic residues. Disordered stretches follow at residues 1–30 (MAFS…CAPK) and 96–149 (ALDG…EKVK). Polar residues predominate over residues 17-26 (VEMSSGTQPS).

In terms of assembly, interacts with 14-3-3 proteins.

Functionally, may regulate the transcriptional function of androgen and estrogen receptors. The sequence is that of Steroid receptor-associated and regulated protein from Mus musculus (Mouse).